Consider the following 91-residue polypeptide: Ice-structuring protein 2A7 (91 aa).

An N-terminal signal peptide occupies residues 1-21; sequence MALSLFTVGQLIFLFWTMRIT. Positions 22–39 are cleaved as a propeptide — removed by a dipeptidylpeptidase; sequence EANPDPAAKAVPAAAAPD.

Belongs to the type-I AFP family. In terms of tissue distribution, detected in blood serum (at protein level).

The protein localises to the secreted. Contributes to protect fish blood from freezing at subzero sea water temperatures. Lowers the blood freezing point. Binds to nascent ice crystals and prevents further growth. The sequence is that of Ice-structuring protein 2A7 from Pseudopleuronectes americanus (Winter flounder).